A 499-amino-acid chain; its full sequence is Multiphosphoryl transfer protein (499 aa).

Residues 2–142 (LELSESNIHL…AEFCAILMGE (141 aa)) form the PTS EIIA type-2 domain. Residue His-62 is the Tele-phosphohistidine intermediate; for EIIA activity of the active site. His-62 bears the Phosphohistidine; by HPr mark. Residues 155–285 (SLDVNTQSLL…SDVETQSVEG (131 aa)) form a m domain region. The region spanning 286–376 (AVVGTFTIRN…KAIANGLGEN (91 aa)) is the HPr 1 domain. His-300 (pros-phosphohistidine intermediate; for HPr 1 activity) is an active-site residue. His-300 is subject to Phosphohistidine. The interval 378 to 409 (SAVPPSEPDTIEIMGDQIHTPAVTEDDNLPAN) is linker. Positions 410-499 (AIEAVFVIKN…GAVIESGLGE (90 aa)) constitute an HPr 2 domain. At His-424 the chain carries Phosphohistidine. The active-site Pros-phosphohistidine intermediate; for HPr 2 activity is His-424.

Its subcellular location is the cytoplasm. Its function is as follows. The phosphoenolpyruvate-dependent sugar phosphotransferase system (sugar PTS), a major carbohydrate active transport system, catalyzes the phosphorylation of incoming sugar substrates concomitantly with their translocation across the cell membrane. The enzyme II FruAB PTS system is involved in fructose transport. The polypeptide is Multiphosphoryl transfer protein (fruB) (Haemophilus influenzae (strain ATCC 51907 / DSM 11121 / KW20 / Rd)).